We begin with the raw amino-acid sequence, 356 residues long: 1-deoxy-D-xylulose 5-phosphate reductoisomerase (356 aa).

Residues threonine 7, glycine 8, serine 9, isoleucine 10, glycine 31, asparagine 33, and asparagine 111 each coordinate NADPH. Lysine 112 is a 1-deoxy-D-xylulose 5-phosphate binding site. An NADPH-binding site is contributed by glutamate 113. Residue aspartate 131 coordinates Mn(2+). The 1-deoxy-D-xylulose 5-phosphate site is built by serine 132, glutamate 133, serine 155, and histidine 178. Glutamate 133 provides a ligand contact to Mn(2+). Glycine 184 contacts NADPH. The 1-deoxy-D-xylulose 5-phosphate site is built by serine 191, asparagine 196, lysine 197, and glutamate 200. Glutamate 200 is a Mn(2+) binding site.

This sequence belongs to the DXR family. Mg(2+) serves as cofactor. It depends on Mn(2+) as a cofactor.

The enzyme catalyses 2-C-methyl-D-erythritol 4-phosphate + NADP(+) = 1-deoxy-D-xylulose 5-phosphate + NADPH + H(+). It participates in isoprenoid biosynthesis; isopentenyl diphosphate biosynthesis via DXP pathway; isopentenyl diphosphate from 1-deoxy-D-xylulose 5-phosphate: step 1/6. Catalyzes the NADPH-dependent rearrangement and reduction of 1-deoxy-D-xylulose-5-phosphate (DXP) to 2-C-methyl-D-erythritol 4-phosphate (MEP). This chain is 1-deoxy-D-xylulose 5-phosphate reductoisomerase, found in Campylobacter jejuni (strain RM1221).